The primary structure comprises 408 residues: ATP phosphoribosyltransferase regulatory subunit (408 aa).

This sequence belongs to the class-II aminoacyl-tRNA synthetase family. HisZ subfamily. Heteromultimer composed of HisG and HisZ subunits.

The protein localises to the cytoplasm. Its pathway is amino-acid biosynthesis; L-histidine biosynthesis; L-histidine from 5-phospho-alpha-D-ribose 1-diphosphate: step 1/9. Required for the first step of histidine biosynthesis. May allow the feedback regulation of ATP phosphoribosyltransferase activity by histidine. The chain is ATP phosphoribosyltransferase regulatory subunit from Thermosynechococcus vestitus (strain NIES-2133 / IAM M-273 / BP-1).